Here is a 100-residue protein sequence, read N- to C-terminus: Large ribosomal subunit protein bL21 (100 aa).

It belongs to the bacterial ribosomal protein bL21 family. As to quaternary structure, part of the 50S ribosomal subunit. Contacts protein L20.

This protein binds to 23S rRNA in the presence of protein L20. In Paramagnetospirillum magneticum (strain ATCC 700264 / AMB-1) (Magnetospirillum magneticum), this protein is Large ribosomal subunit protein bL21.